Reading from the N-terminus, the 404-residue chain is Cysteine desulfurase IscS (404 aa).

Pyridoxal 5'-phosphate contacts are provided by residues 75–76 (AT), Asn155, Gln183, and 203–205 (SAH). An N6-(pyridoxal phosphate)lysine modification is found at Lys206. Residue Thr243 participates in pyridoxal 5'-phosphate binding. Cys328 functions as the Cysteine persulfide intermediate in the catalytic mechanism. Cys328 is a binding site for [2Fe-2S] cluster.

The protein belongs to the class-V pyridoxal-phosphate-dependent aminotransferase family. NifS/IscS subfamily. As to quaternary structure, homodimer. Forms a heterotetramer with IscU, interacts with other sulfur acceptors. Pyridoxal 5'-phosphate serves as cofactor.

The protein localises to the cytoplasm. It carries out the reaction (sulfur carrier)-H + L-cysteine = (sulfur carrier)-SH + L-alanine. It functions in the pathway cofactor biosynthesis; iron-sulfur cluster biosynthesis. Functionally, master enzyme that delivers sulfur to a number of partners involved in Fe-S cluster assembly, tRNA modification or cofactor biosynthesis. Catalyzes the removal of elemental sulfur atoms from cysteine to produce alanine. Functions as a sulfur delivery protein for Fe-S cluster synthesis onto IscU, an Fe-S scaffold assembly protein, as well as other S acceptor proteins. The polypeptide is Cysteine desulfurase IscS (Neisseria gonorrhoeae (strain ATCC 700825 / FA 1090)).